Consider the following 318-residue polypeptide: Glycine--tRNA ligase alpha subunit (318 aa).

Belongs to the class-II aminoacyl-tRNA synthetase family. As to quaternary structure, tetramer of two alpha and two beta subunits.

The protein localises to the cytoplasm. It carries out the reaction tRNA(Gly) + glycine + ATP = glycyl-tRNA(Gly) + AMP + diphosphate. The chain is Glycine--tRNA ligase alpha subunit from Chelativorans sp. (strain BNC1).